A 62-amino-acid chain; its full sequence is Large ribosomal subunit protein bL28 (62 aa).

The segment at 1-27 (MARKCVVTGRQTRSGNQRSHAMNSNKR) is disordered. Residues 9-26 (GRQTRSGNQRSHAMNSNK) are compositionally biased toward polar residues.

It belongs to the bacterial ribosomal protein bL28 family.

This chain is Large ribosomal subunit protein bL28, found in Oceanobacillus iheyensis (strain DSM 14371 / CIP 107618 / JCM 11309 / KCTC 3954 / HTE831).